Here is a 183-residue protein sequence, read N- to C-terminus: MASRAGPRAAGTDGSDFQHRERVAMHYQMSVTLKYEIKKLIYVHLVIWLLLVAKMSVGHLRLLSHDQVAMPYQWEYPYLLSILPSLLGLLSFPRNNISYLVLSMISMGLFSIAPLIYGSMEMFPAAQQLYRHGKAYRFLFGFSAVSIMYLVLVLAVQVHAWQLYYSKKLLDSWFTSTQEKKHK.

At 1–39 the chain is on the cytoplasmic side; it reads MASRAGPRAAGTDGSDFQHRERVAMHYQMSVTLKYEIKK. The residue at position 3 (Ser3) is a Phosphoserine. Residues 40–60 traverse the membrane as a helical segment; the sequence is LIYVHLVIWLLLVAKMSVGHL. Topologically, residues 61 to 71 are lumenal; that stretch reads RLLSHDQVAMP. Residues 72 to 92 form a helical membrane-spanning segment; it reads YQWEYPYLLSILPSLLGLLSF. Over 93-96 the chain is Cytoplasmic; the sequence is PRNN. A helical membrane pass occupies residues 97–117; sequence ISYLVLSMISMGLFSIAPLIY. The Lumenal portion of the chain corresponds to 118–137; sequence GSMEMFPAAQQLYRHGKAYR. A helical membrane pass occupies residues 138 to 158; sequence FLFGFSAVSIMYLVLVLAVQV. The Cytoplasmic segment spans residues 159–183; the sequence is HAWQLYYSKKLLDSWFTSTQEKKHK.

Belongs to the jagunal family. In terms of assembly, interacts with COPA, COPB2 and COPG2. Ubiquitously expressed.

The protein localises to the endoplasmic reticulum membrane. In terms of biological role, endoplasmic reticulum transmembrane protein involved in vesicle-mediated transport, which is required for neutrophil function. Required for vesicle-mediated transport; it is however unclear whether it is involved in early secretory pathway or intracellular protein transport. Acts as a regulator of neutrophil function, probably via its role in vesicle-mediated transport: required for defense against fungal pathogens and for granulocyte colony-stimulating factor (GM-CSF) signaling pathway; possibly by regulating glycosylation and/or targeting of proteins contributing to the viability and migration of neutrophils. This chain is Protein jagunal homolog 1, found in Homo sapiens (Human).